The sequence spans 443 residues: Tol-Pal system protein TolB (443 aa).

An N-terminal signal peptide occupies residues 1-31 (MTRLAKGKWRSTLGAMMALAVMVAAIPQARA). Over residues 423 to 432 (NERQISTPTE) the composition is skewed to polar residues. Positions 423 to 443 (NERQISTPTEASDPAWSPLLP) are disordered.

The protein belongs to the TolB family. As to quaternary structure, the Tol-Pal system is composed of five core proteins: the inner membrane proteins TolA, TolQ and TolR, the periplasmic protein TolB and the outer membrane protein Pal. They form a network linking the inner and outer membranes and the peptidoglycan layer.

Its subcellular location is the periplasm. Functionally, part of the Tol-Pal system, which plays a role in outer membrane invagination during cell division and is important for maintaining outer membrane integrity. This Rhodospirillum rubrum (strain ATCC 11170 / ATH 1.1.1 / DSM 467 / LMG 4362 / NCIMB 8255 / S1) protein is Tol-Pal system protein TolB.